The following is a 370-amino-acid chain: Queuine tRNA-ribosyltransferase (370 aa).

Catalysis depends on D93, which acts as the Proton acceptor. Residues 93–97 (DSGGF), D147, Q190, and G217 contribute to the substrate site. An RNA binding region spans residues 248-254 (GVGTPDY). D267 functions as the Nucleophile in the catalytic mechanism. Positions 272–276 (TRVAR) are RNA binding; important for wobble base 34 recognition. C305, C307, C310, and H336 together coordinate Zn(2+).

The protein belongs to the queuine tRNA-ribosyltransferase family. As to quaternary structure, homodimer. Within each dimer, one monomer is responsible for RNA recognition and catalysis, while the other monomer binds to the replacement base PreQ1. It depends on Zn(2+) as a cofactor.

The enzyme catalyses 7-aminomethyl-7-carbaguanine + guanosine(34) in tRNA = 7-aminomethyl-7-carbaguanosine(34) in tRNA + guanine. Its pathway is tRNA modification; tRNA-queuosine biosynthesis. Functionally, catalyzes the base-exchange of a guanine (G) residue with the queuine precursor 7-aminomethyl-7-deazaguanine (PreQ1) at position 34 (anticodon wobble position) in tRNAs with GU(N) anticodons (tRNA-Asp, -Asn, -His and -Tyr). Catalysis occurs through a double-displacement mechanism. The nucleophile active site attacks the C1' of nucleotide 34 to detach the guanine base from the RNA, forming a covalent enzyme-RNA intermediate. The proton acceptor active site deprotonates the incoming PreQ1, allowing a nucleophilic attack on the C1' of the ribose to form the product. After dissociation, two additional enzymatic reactions on the tRNA convert PreQ1 to queuine (Q), resulting in the hypermodified nucleoside queuosine (7-(((4,5-cis-dihydroxy-2-cyclopenten-1-yl)amino)methyl)-7-deazaguanosine). The polypeptide is Queuine tRNA-ribosyltransferase (Natranaerobius thermophilus (strain ATCC BAA-1301 / DSM 18059 / JW/NM-WN-LF)).